We begin with the raw amino-acid sequence, 416 residues long: NADH-quinone oxidoreductase subunit D (416 aa).

Belongs to the complex I 49 kDa subunit family. As to quaternary structure, NDH-1 is composed of 14 different subunits. Subunits NuoB, C, D, E, F, and G constitute the peripheral sector of the complex.

The protein resides in the cell inner membrane. It carries out the reaction a quinone + NADH + 5 H(+)(in) = a quinol + NAD(+) + 4 H(+)(out). Functionally, NDH-1 shuttles electrons from NADH, via FMN and iron-sulfur (Fe-S) centers, to quinones in the respiratory chain. The immediate electron acceptor for the enzyme in this species is believed to be ubiquinone. Couples the redox reaction to proton translocation (for every two electrons transferred, four hydrogen ions are translocated across the cytoplasmic membrane), and thus conserves the redox energy in a proton gradient. This Gluconacetobacter diazotrophicus (strain ATCC 49037 / DSM 5601 / CCUG 37298 / CIP 103539 / LMG 7603 / PAl5) protein is NADH-quinone oxidoreductase subunit D.